The sequence spans 1913 residues: Protein TIC 214 (1913 aa).

The next 5 helical transmembrane spans lie at isoleucine 18–glycine 38, phenylalanine 64–leucine 84, leucine 124–leucine 144, valine 172–isoleucine 192, and leucine 214–leucine 234. 3 disordered regions span residues lysine 245–glutamate 330, tyrosine 707–threonine 734, and glutamate 1605–lysine 1652. Residues lysine 260 to glutamine 289 are compositionally biased toward basic and acidic residues. Residues glutamate 303–glutamate 314 show a composition bias toward acidic residues. A compositionally biased stretch (basic and acidic residues) spans glutamate 315 to glutamate 330. Residues proline 718–asparagine 729 show a composition bias toward low complexity.

Belongs to the TIC214 family. Part of the Tic complex.

It localises to the plastid. The protein localises to the chloroplast inner membrane. Functionally, involved in protein precursor import into chloroplasts. May be part of an intermediate translocation complex acting as a protein-conducting channel at the inner envelope. The protein is Protein TIC 214 of Acorus calamus var. americanus (American sweet flag).